The primary structure comprises 415 residues: Tyrosine--tRNA ligase (415 aa).

Residue tyrosine 34 coordinates L-tyrosine. The short motif at 39 to 48 (PTADSLHLGH) is the 'HIGH' region element. The L-tyrosine site is built by tyrosine 164 and glutamine 168. The 'KMSKS' region motif lies at 226–230 (KFGKS). Lysine 229 contributes to the ATP binding site. In terms of domain architecture, S4 RNA-binding spans 348–415 (KNVVDFLVDG…KKKYFLGKVK (68 aa)).

It belongs to the class-I aminoacyl-tRNA synthetase family. TyrS type 1 subfamily. In terms of assembly, homodimer.

It localises to the cytoplasm. It carries out the reaction tRNA(Tyr) + L-tyrosine + ATP = L-tyrosyl-tRNA(Tyr) + AMP + diphosphate + H(+). Catalyzes the attachment of tyrosine to tRNA(Tyr) in a two-step reaction: tyrosine is first activated by ATP to form Tyr-AMP and then transferred to the acceptor end of tRNA(Tyr). This is Tyrosine--tRNA ligase from Leuconostoc mesenteroides subsp. mesenteroides (strain ATCC 8293 / DSM 20343 / BCRC 11652 / CCM 1803 / JCM 6124 / NCDO 523 / NBRC 100496 / NCIMB 8023 / NCTC 12954 / NRRL B-1118 / 37Y).